A 63-amino-acid chain; its full sequence is Large ribosomal subunit protein uL29 (63 aa).

This sequence belongs to the universal ribosomal protein uL29 family.

The sequence is that of Large ribosomal subunit protein uL29 from Listeria innocua serovar 6a (strain ATCC BAA-680 / CLIP 11262).